The sequence spans 87 residues: Potassium channel toxin TsTXK-beta/Cryptide TyPep-16 (87 aa).

The signal sequence occupies residues 1–19; that stretch reads MERKLALLLILGMVTLASC. In terms of domain architecture, BetaSPN-type CS-alpha/beta spans 53–87; the sequence is QFGCPAYEGYCNDHCNDIERKDGECHGFKCKCAKD. 3 cysteine pairs are disulfide-bonded: cysteine 56/cysteine 77, cysteine 63/cysteine 82, and cysteine 67/cysteine 84.

It belongs to the long chain scorpion toxin family. Class 1 subfamily. Expressed by the venom gland.

It is found in the secreted. In terms of biological role, specifically blocks voltage-gated potassium channels Kv4.2/KCND2. When measured at the peak current, the blocking effect of this toxin is about 65% and shows an IC(50)=652 nM. However, when measured at a later moment of the depolarising test pulse (500 ms), a 100% block of the current is observed with an IC(50)=313 nM. This may indicate a preference of the toxin for binding the inactivated state of the channel. The inhibition is completely reversible. In vivo, intraplantar injection into rat paw induces overt nociception (licking and lifting behaviors) and decreases the mechanical nociceptive threshold (hyperalgesia). Furthermore, the hyperalgesia is prolonged when intrathecal injections are performed. Its function is as follows. Induces discomfort and anxiety in mice, as it moderately diminishes locomotion (but has no effect on rearing behavior). Does not cause hemolysis, mast cell degranulation, LDH release, and does not have antimicrobial activity. Does not cause edema and pain. Functionally, does not induce hemolytic activity, lactate dehydrogenase (LDH) release from mast cells, mast cell degranulation, and antimicrobial effects. In vivo, injection into mice causes moderate edema formation, but induces very weak or no change in nociceptive sensibility. It also reduces mice locomotion, suggesting an increase in anxiety, but causes no alteration in rearing (standing on hind limbs). This is Potassium channel toxin TsTXK-beta/Cryptide TyPep-16 from Tityus serrulatus (Brazilian scorpion).